A 120-amino-acid polypeptide reads, in one-letter code: Late cornified envelope-like proline-rich protein 1 (120 aa).

It belongs to the cornifin (SPRR) family.

The polypeptide is Late cornified envelope-like proline-rich protein 1 (Lelp1) (Mus musculus (Mouse)).